The sequence spans 535 residues: Methylmalonate-semialdehyde/malonate-semialdehyde dehydrogenase [acylating], mitochondrial (535 aa).

A mitochondrion-targeting transit peptide spans 1–33 (MAALLAAAAVRARILQVSSKVKSSPTWYSASSF). N6-acetyllysine; alternate occurs at positions 47, 52, 55, and 76. Lys47, Lys52, Lys55, and Lys76 each carry N6-succinyllysine; alternate. Lys87 bears the N6-acetyllysine mark. N6-acetyllysine; alternate occurs at positions 117 and 129. 2 positions are modified to N6-succinyllysine; alternate: Lys117 and Lys129. Residues Ala183, Phe185, Lys209, Glu212, Arg213, and Ser262 each contribute to the NAD(+) site. Ser262 carries the phosphoserine modification. Lys298 is subject to N6-acetyllysine. Residue Cys317 is the Nucleophile of the active site. N6-acetyllysine is present on residues Lys330 and Lys331. N6-acetyllysine; alternate occurs at positions 364 and 376. Lys364 and Lys376 each carry N6-succinyllysine; alternate. Ser380 is modified (phosphoserine). Lys391 is modified (N6-succinyllysine). Glu417 provides a ligand contact to NAD(+). At Lys500 the chain carries N6-acetyllysine. Lys517 is modified (N6-succinyllysine).

Belongs to the aldehyde dehydrogenase family. In terms of assembly, homotetramer.

Its subcellular location is the mitochondrion. The enzyme catalyses 3-oxopropanoate + NAD(+) + CoA + H2O = hydrogencarbonate + acetyl-CoA + NADH + H(+). It catalyses the reaction 2-methyl-3-oxopropanoate + NAD(+) + CoA + H2O = propanoyl-CoA + hydrogencarbonate + NADH + H(+). The catalysed reaction is (R)-2-methyl-3-oxopropanoate + NAD(+) + CoA + H2O = propanoyl-CoA + hydrogencarbonate + NADH + H(+). It carries out the reaction (S)-2-methyl-3-oxopropanoate + NAD(+) + CoA + H2O = propanoyl-CoA + hydrogencarbonate + NADH + H(+). Functionally, malonate and methylmalonate semialdehyde dehydrogenase involved in the catabolism of valine, thymine, and compounds catabolized by way of beta-alanine, including uracil and cytidine. The sequence is that of Methylmalonate-semialdehyde/malonate-semialdehyde dehydrogenase [acylating], mitochondrial from Homo sapiens (Human).